Consider the following 257-residue polypeptide: Beta-fibrinogenase mucrofibrase-1 (257 aa).

The first 18 residues, 1–18 (MVLIRVLANLLILQLSYA), serve as a signal peptide directing secretion. A propeptide spanning residues 19-24 (QKSSEL) is cleaved from the precursor. The Peptidase S1 domain occupies 25–248 (VIGGDECNIN…HLDWIKGIIA (224 aa)). 6 cysteine pairs are disulfide-bonded: cysteine 31–cysteine 162, cysteine 49–cysteine 65, cysteine 97–cysteine 255, cysteine 141–cysteine 209, cysteine 173–cysteine 188, and cysteine 199–cysteine 224. Catalysis depends on charge relay system residues histidine 64 and aspartate 109. Serine 203 acts as the Charge relay system in catalysis.

The protein belongs to the peptidase S1 family. Snake venom subfamily. As to quaternary structure, monomer. Expressed by the venom gland.

The protein localises to the secreted. Functionally, snake venom serine protease with strong beta-fibrinogenolytic activities, angiotensin I (AGT)-degrading activities and strong kallikrein-like activities in vitro, releasing bradykinin from kininogen (KNG1). Intravenous injection strongly lowers blood pressure in experimental rats, which may be explained by the action on angiotensin I and kininogen. This Protobothrops mucrosquamatus (Taiwan habu) protein is Beta-fibrinogenase mucrofibrase-1.